We begin with the raw amino-acid sequence, 166 residues long: Protein FAM89A (166 aa).

Belongs to the FAM89 family.

This Xenopus laevis (African clawed frog) protein is Protein FAM89A (fam89a).